The following is a 259-amino-acid chain: Protein CWC15 homolog (259 aa).

The disordered stretch occupies residues 1 to 182 (MTTAARPTFD…EKKQEDERIR (182 aa)). The span at 52-71 (DENRNRDFRKELEEREREAR) shows a compositional bias: basic and acidic residues. Low complexity-rich tracts occupy residues 72-82 (SGTGATSSSSG) and 114-126 (QQQAQQAAQQQAA). The segment covering 129–150 (DADEPLDNDSSDSDSDSDDDDA) has biased composition (acidic residues). The stretch at 150-182 (AALLAELQKIKQERLQETARRESEKKQEDERIR) forms a coiled coil. Residues 157 to 182 (QKIKQERLQETARRESEKKQEDERIR) are compositionally biased toward basic and acidic residues.

It belongs to the CWC15 family.

Functionally, involved in pre-mRNA splicing. The polypeptide is Protein CWC15 homolog (c12.1) (Drosophila melanogaster (Fruit fly)).